We begin with the raw amino-acid sequence, 1270 residues long: Activating transcription factor 7-interacting protein 1 (1270 aa).

Met-1 carries the post-translational modification N-acetylmethionine. Residue Lys-33 forms a Glycyl lysine isopeptide (Lys-Gly) (interchain with G-Cter in SUMO2) linkage. Phosphoserine is present on residues Ser-57 and Ser-113. Disordered regions lie at residues 104–223 and 235–402; these read DDDL…ISGD and TSVD…EDET. Thr-118 bears the Phosphothreonine mark. 2 stretches are compositionally biased toward low complexity: residues 132–203 and 248–269; these read GDPA…SSGD and DPASDDLASGDLSSSELASDDL. Basic and acidic residues-rich tracts occupy residues 310 to 327 and 333 to 343; these read SNKDDDFLEKNGADEKLE and DSLDEKNKADN. Acidic residues predominate over residues 347–356; that stretch reads ANEETLETDD. Residues 363–373 are compositionally biased toward basic and acidic residues; the sequence is RPPENEKKVEE. A phosphoserine mark is found at Ser-445, Ser-473, Ser-474, Ser-477, Ser-479, and Ser-496. Disordered stretches follow at residues 455 to 570, 658 to 685, 822 to 862, and 886 to 906; these read TSLL…SKRR, EDLKKRHEHPPNPPVSPGKTVNDVNSNN, PPTV…PTAS, and RTSLPTVGPSGLYSPSTNRGP. A compositionally biased stretch (polar residues) spans 474–486; the sequence is SFGSPSKQESSES. Residues 496–509 are compositionally biased toward acidic residues; that stretch reads SDEEDISGEKDESE. Positions 524-552 are enriched in basic and acidic residues; it reads SNEKDNKPEEEEQVIHEDDERPSEKNEFS. A Nuclear localization signal motif is present at residues 553-571; that stretch reads RRKRSKSEDMDNVQSKRRR. A Glycyl lysine isopeptide (Lys-Gly) (interchain with G-Cter in SUMO2) cross-link involves residue Lys-558. The residue at position 559 (Ser-559) is a Phosphoserine. The interaction with SETDB1 stretch occupies residues 562 to 817; it reads MDNVQSKRRR…NQPSGNVEFI (256 aa). Residues 617 to 665 are a coiled coil; it reads KTLAELKTRVEKIECNKRHKTVLTELQAKIARLTKRFEAAKEDLKKRHE. Position 673 is a phosphoserine (Ser-673). The span at 822 to 834 shows a compositional bias: polar residues; it reads PPTVSGLTKNPVS. A compositionally biased stretch (low complexity) spans 843–854; that stretch reads KPNNVPSVPSPS. Ser-899 carries the post-translational modification Phosphoserine. Glycyl lysine isopeptide (Lys-Gly) (interchain with G-Cter in SUMO2) cross-links involve residues Lys-910 and Lys-938. Polar residues-rich tracts occupy residues 918–942 and 950–964; these read TSSAAEQNSNTTPRIENQTNKTIDA and DSTSQCGKATGSDSS. 2 disordered regions span residues 918 to 1026 and 1115 to 1160; these read TSSA…SQTT and STGP…STSL. Positions 965–975 are interaction with SUMO; it reads GVIDLTMDDEE. 2 stretches are compositionally biased toward polar residues: residues 988–999 and 1016–1026; these read TPVSTMSSSQPV and GVPTSGPSQTT. Pro residues predominate over residues 1134–1151; the sequence is PRPVHPAPLPEAPQPQRL. An interaction with MBD1 region spans residues 1154–1270; that stretch reads EAASTSLPQK…TDVISSTQSS (117 aa). Positions 1160-1270 constitute a Fibronectin type-III domain; that stretch reads LPQKPHLKLA…TDVISSTQSS (111 aa).

Belongs to the MCAF family. As to quaternary structure, interacts with MBD1; the interaction is enhanced when MBD1 is sumoylated. Interacts with SETDB1; the interaction protects SETDB1 from proteasomal degradation and is required to stimulate histone methyltransferase activity and facilitate the conversion of dimethylated to trimethylated H3 'Lys-9'. Interacts with SUMO ubiquitin-like proteins (SUMO1, SUNO2 and SUMO3), with a preference for SUMO2 and SUMO3. Interacts with SP1, ATF7 and ZHX1. Interacts with the general transcription machinery, including ERCC2, ERCC3, GTF2E1, GTF2E2 and POLR2A. In terms of assembly, (Microbial infection) Interacts with Epstein-Barr virus BRLF1/Rta protein, leading to the regulation of host genes in Epstein-Barr virus-infected cells. In terms of tissue distribution, detected at low levels in breast, lung and stomach; highly up-regulated in the corresponding cancerous tissues (at protein level).

It is found in the nucleus. In terms of biological role, recruiter that couples transcriptional factors to general transcription apparatus and thereby modulates transcription regulation and chromatin formation. Can both act as an activator or a repressor depending on the context. Required for HUSH-mediated heterochromatin formation and gene silencing. Mediates MBD1-dependent transcriptional repression, probably by recruiting complexes containing SETDB1. Stabilizes SETDB1, is required to stimulate histone methyltransferase activity of SETDB1 and facilitates the conversion of dimethylated to trimethylated H3 'Lys-9' (H3K9me3). The complex formed with MBD1 and SETDB1 represses transcription and couples DNA methylation and histone H3 'Lys-9' trimethylation (H3K9me3). Facilitates telomerase TERT and TERC gene expression by SP1 in cancer cells. The polypeptide is Activating transcription factor 7-interacting protein 1 (Homo sapiens (Human)).